A 384-amino-acid polypeptide reads, in one-letter code: Cell division protein FtsZ (384 aa).

GTP-binding positions include 20–24 (GGGGN), 107–109 (GTG), Glu-138, Arg-142, and Asn-186.

It belongs to the FtsZ family. As to quaternary structure, homodimer. Polymerizes to form a dynamic ring structure in a strictly GTP-dependent manner. Interacts directly with several other division proteins.

It is found in the cytoplasm. In terms of biological role, essential cell division protein that forms a contractile ring structure (Z ring) at the future cell division site. The regulation of the ring assembly controls the timing and the location of cell division. One of the functions of the FtsZ ring is to recruit other cell division proteins to the septum to produce a new cell wall between the dividing cells. Binds GTP and shows GTPase activity. The protein is Cell division protein FtsZ of Wigglesworthia glossinidia brevipalpis.